The primary structure comprises 613 residues: Portal protein (613 aa).

The tract at residues 577–613 is disordered; it reads ATGGDHGIRQAPSARGDAEPDHAKSKPARDPPPGAGS. A compositionally biased stretch (basic and acidic residues) spans 592–605; the sequence is GDAEPDHAKSKPAR.

It belongs to the herpesviridae portal protein family. In terms of assembly, homododecamerizes. Interacts with terminase subunits TRM1 and TRM3.

It localises to the virion. Its subcellular location is the host nucleus. In terms of biological role, forms a portal in the viral capsid through which viral DNA is translocated during DNA packaging. Assembles as a dodecamer at a single fivefold axe of the T=16 icosahedric capsid. Binds to the molecular motor that translocates the viral DNA, termed terminase. The sequence is that of Portal protein from Homo sapiens (Human).